Here is a 132-residue protein sequence, read N- to C-terminus: Small ribosomal subunit protein uS8 (132 aa).

This sequence belongs to the universal ribosomal protein uS8 family. In terms of assembly, part of the 30S ribosomal subunit. Contacts proteins S5 and S12.

One of the primary rRNA binding proteins, it binds directly to 16S rRNA central domain where it helps coordinate assembly of the platform of the 30S subunit. This chain is Small ribosomal subunit protein uS8, found in Leuconostoc citreum (strain KM20).